Here is an 86-residue protein sequence, read N- to C-terminus: Small ribosomal subunit protein bS16 (86 aa).

It belongs to the bacterial ribosomal protein bS16 family.

This Xylella fastidiosa (strain 9a5c) protein is Small ribosomal subunit protein bS16.